We begin with the raw amino-acid sequence, 483 residues long: Glutamyl-tRNA(Gln) amidotransferase subunit A (483 aa).

Residues Lys77 and Ser152 each act as charge relay system in the active site. The active-site Acyl-ester intermediate is Ser176.

The protein belongs to the amidase family. GatA subfamily. Heterotrimer of A, B and C subunits.

It carries out the reaction L-glutamyl-tRNA(Gln) + L-glutamine + ATP + H2O = L-glutaminyl-tRNA(Gln) + L-glutamate + ADP + phosphate + H(+). In terms of biological role, allows the formation of correctly charged Gln-tRNA(Gln) through the transamidation of misacylated Glu-tRNA(Gln) in organisms which lack glutaminyl-tRNA synthetase. The reaction takes place in the presence of glutamine and ATP through an activated gamma-phospho-Glu-tRNA(Gln). This chain is Glutamyl-tRNA(Gln) amidotransferase subunit A, found in Shouchella clausii (strain KSM-K16) (Alkalihalobacillus clausii).